Reading from the N-terminus, the 357-residue chain is Peptide chain release factor 1 (357 aa).

Glutamine 232 carries the N5-methylglutamine modification. Residues 282-291 (KQRAEQEAAR) show a composition bias toward basic and acidic residues. A disordered region spans residues 282-302 (KQRAEQEAARRSQVGTGDRSE).

The protein belongs to the prokaryotic/mitochondrial release factor family. In terms of processing, methylated by PrmC. Methylation increases the termination efficiency of RF1.

It localises to the cytoplasm. Functionally, peptide chain release factor 1 directs the termination of translation in response to the peptide chain termination codons UAG and UAA. The protein is Peptide chain release factor 1 of Solidesulfovibrio magneticus (strain ATCC 700980 / DSM 13731 / RS-1) (Desulfovibrio magneticus).